Here is a 724-residue protein sequence, read N- to C-terminus: Cyclin-T1 (724 aa).

S117 carries the phosphoserine modification. Residues K253–D270 carry the Nuclear localization signal motif. Residue K342 forms a Glycyl lysine isopeptide (Lys-Gly) (interchain with G-Cter in SUMO2) linkage. A coiled-coil region spans residues S384–L425. Phosphoserine is present on S388. K390 bears the N6-acetyllysine mark. Residue K415 forms a Glycyl lysine isopeptide (Lys-Gly) (interchain with G-Cter in SUMO2) linkage. ADP-ribosylserine is present on residues S416, S473, and S474. Residues I479–Q549 are histidine-rich domain (HRD). A Glycyl lysine isopeptide (Lys-Gly) (interchain with G-Cter in SUMO2) cross-link involves residue K480. Over residues I483–E507 the composition is skewed to basic and acidic residues. Disordered regions lie at residues I483 to H586 and P691 to K724. K484 carries the N6-(ADP-ribosyl)lysine modification. H486 is subject to ADP-ribosylhistidine. A phosphoserine mark is found at S494 and S498. Over residues K508–H529 the composition is skewed to basic residues. An ADP-ribosylhistidine modification is found at H529. Residues S548 and S551 each carry the ADP-ribosylserine modification. H555 is subject to ADP-ribosylhistidine. Low complexity predominate over residues S559–S569. ADP-ribosylserine is present on S562. The span at P708–K724 shows a compositional bias: pro residues.

The protein belongs to the cyclin family. Cyclin C subfamily. In terms of assembly, cyclin-T1 is the predominant cyclin that associates with CDK9 to form a heterodimer called P-TEFb. P-TEFb forms a complex with AFF4/AF5Q31. Component of a complex which is at least composed of HTATSF1/Tat-SF1, P-TEFb complex, RNA pol II, SUPT5H, and NCL/nucleolin. Component of the 7SK snRNP complex at least composed of P-TEFb (composed of CDK9 and CCNT1/cyclin-T1), HEXIM1, HEXIM2, BCDIN3, SART3 proteins and 7SK and U6 snRNAs. Interacts (via central region) with ZMYND8 (via N-terminus); the interaction is direct and the association appears to occur between homodimeric ZMYND8 and the activated form of the P-TEFb complex. Interacts with BRD4, targets chromatin binding. Interacts with JMJD6. Interacts with MDFIC. Interacts with HSF1. Interacts with HTATSF1. Interacts with TBX21. ADP-ribosylation on serine residues by PARP1 in response to DNA damage disrupts the phase separation activity of CCNT1, thereby preventing activation of CDK9.

The protein localises to the nucleus. In terms of biological role, regulatory subunit of the cyclin-dependent kinase pair (CDK9/cyclin-T1) complex, also called positive transcription elongation factor B (P-TEFb), which facilitates the transition from abortive to productive elongation by phosphorylating the CTD (C-terminal domain) of the large subunit of RNA polymerase II (RNA Pol II). Required to activate the protein kinase activity of CDK9: acts by mediating formation of liquid-liquid phase separation (LLPS) that enhances binding of P-TEFb to the CTD of RNA Pol II. In Mus musculus (Mouse), this protein is Cyclin-T1 (Ccnt1).